Here is a 534-residue protein sequence, read N- to C-terminus: Protein tweety homolog 2 (534 aa).

Residues 1–44 (MAAARVEYIAPWWVYWLHNFPHVDLSLRQKSPDFNPKDPGYQQT) are Extracellular-facing. Residues 45–65 (LLFVALIVALCAAVNLLFVSV) form a helical membrane-spanning segment. Residues 66–87 (YLICLCCCKKEDETETKKTSSC) lie on the Cytoplasmic side of the membrane. Residues 88–108 (CVTWTAAVSGLLCCAAVGIGF) traverse the membrane as a helical segment. Residues 109 to 213 (YGNSETNDGV…QTSTIEYYRW (105 aa)) lie on the Extracellular side of the membrane. Ca(2+)-binding residues include Glu-113 and Asp-116. N-linked (GlcNAc...) asparagine glycosylation occurs at Asn-129. The RGD signature appears at 164–166 (RGD). N-linked (GlcNAc...) asparagine glycosylation is present at Asn-197. Residues 214 to 234 (LSYLLLFISYVVICLVTCVGL) form a helical membrane-spanning segment. The Cytoplasmic portion of the chain corresponds to 235-240 (AKKSKC). Residues 241 to 261 (LLLIMLCFGLIALMLSWTSLA) form a helical membrane-spanning segment. The Extracellular portion of the chain corresponds to 262 to 388 (LETSSAMGTS…IGICYDGVEG (127 aa)). Cystine bridges form between Cys-274–Cys-382 and Cys-300–Cys-367. Asn-283 and Asn-352 each carry an N-linked (GlcNAc...) asparagine glycan. Residues 389–409 (MLYLGLFSLLAALAFTAMVCA) traverse the membrane as a helical segment. The Cytoplasmic portion of the chain corresponds to 410-534 (MPQAWKHLEA…SSIYSNVFPA (125 aa)).

Belongs to the tweety family. Forms cis-homodimers in the presence of Ca(+2) and forms monomers and trans-dimers in the absence of Ca(2+).

The protein localises to the cell membrane. The catalysed reaction is chloride(in) = chloride(out). The enzyme catalyses L-glutamate(out) = L-glutamate(in). In terms of biological role, may act as a calcium-independent, swelling-dependent volume-regulated anion channel (VRAC-swell) which plays a pivotal role in the process of regulatory volume decrease (RVD) in the brain through the efflux of anions like chloride and organic osmolytes like glutamate. Probable large-conductance Ca(2+)-activated chloride channel. The chain is Protein tweety homolog 2 (ttyh2) from Xenopus tropicalis (Western clawed frog).